The following is a 156-amino-acid chain: EPIDERMAL PATTERNING FACTOR-like protein 6 (156 aa).

An N-terminal signal peptide occupies residues 1 to 47 (MGFERTSSSLSLLSSSLPSSLQPSENTRAKFSLFYLLLLFFVLCVIA). 3 disulfide bridges follow: Cys-113–Cys-147, Cys-117–Cys-123, and Cys-120–Cys-149.

It belongs to the plant cysteine rich small secretory peptide family. Epidermal patterning factor subfamily. Interacts with ERECTA. As to expression, expressed in the internal layers of the root, hypocotyl and stems, and in the midrib of developing rosette leaves. Detected in a ring of cells surrounding the vascular elements. Expressed in developing stems soon after bolting, in inflorescence stems, near the root apex and in the chalazal region of ovules. Not found in cotyledons or in stomatal precursors or stomata.

The protein localises to the secreted. In terms of biological role, acts primarily as positive regulator of inflorescence growth. Endodermal expression is sufficient for proper inflorescence architecture. Redundantly involved with EPFL4 in procambial development regulation. Also acts as tissue-specific regulator of epidermal pattern. Controls stomatal patterning by repressing stomatal production. TMM (AC Q9SSD1) functions to dampen or block CHAL signaling. Not processed by SDD1 (AC O64495). Acts as growth-regulatory ligand for ERECTA family receptors. The chain is EPIDERMAL PATTERNING FACTOR-like protein 6 from Arabidopsis thaliana (Mouse-ear cress).